The primary structure comprises 319 residues: 4-hydroxy-3-methylbut-2-enyl diphosphate reductase (319 aa).

[4Fe-4S] cluster is bound at residue Cys15. (2E)-4-hydroxy-3-methylbut-2-enyl diphosphate-binding residues include His44 and His77. Dimethylallyl diphosphate contacts are provided by His44 and His77. The isopentenyl diphosphate site is built by His44 and His77. Position 99 (Cys99) interacts with [4Fe-4S] cluster. His127 contributes to the (2E)-4-hydroxy-3-methylbut-2-enyl diphosphate binding site. His127 contributes to the dimethylallyl diphosphate binding site. His127 contributes to the isopentenyl diphosphate binding site. Glu129 acts as the Proton donor in catalysis. Thr167 serves as a coordination point for (2E)-4-hydroxy-3-methylbut-2-enyl diphosphate. Cys197 is a [4Fe-4S] cluster binding site. Ser225, Ser226, Asn227, and Ser269 together coordinate (2E)-4-hydroxy-3-methylbut-2-enyl diphosphate. Ser225, Ser226, Asn227, and Ser269 together coordinate dimethylallyl diphosphate. Isopentenyl diphosphate-binding residues include Ser225, Ser226, Asn227, and Ser269.

This sequence belongs to the IspH family. [4Fe-4S] cluster serves as cofactor.

The enzyme catalyses isopentenyl diphosphate + 2 oxidized [2Fe-2S]-[ferredoxin] + H2O = (2E)-4-hydroxy-3-methylbut-2-enyl diphosphate + 2 reduced [2Fe-2S]-[ferredoxin] + 2 H(+). It catalyses the reaction dimethylallyl diphosphate + 2 oxidized [2Fe-2S]-[ferredoxin] + H2O = (2E)-4-hydroxy-3-methylbut-2-enyl diphosphate + 2 reduced [2Fe-2S]-[ferredoxin] + 2 H(+). It participates in isoprenoid biosynthesis; dimethylallyl diphosphate biosynthesis; dimethylallyl diphosphate from (2E)-4-hydroxy-3-methylbutenyl diphosphate: step 1/1. The protein operates within isoprenoid biosynthesis; isopentenyl diphosphate biosynthesis via DXP pathway; isopentenyl diphosphate from 1-deoxy-D-xylulose 5-phosphate: step 6/6. Its function is as follows. Catalyzes the conversion of 1-hydroxy-2-methyl-2-(E)-butenyl 4-diphosphate (HMBPP) into a mixture of isopentenyl diphosphate (IPP) and dimethylallyl diphosphate (DMAPP). Acts in the terminal step of the DOXP/MEP pathway for isoprenoid precursor biosynthesis. The sequence is that of 4-hydroxy-3-methylbut-2-enyl diphosphate reductase from Rhodopirellula baltica (strain DSM 10527 / NCIMB 13988 / SH1).